The primary structure comprises 505 residues: UDP-N-acetylglucosamine diphosphorylase 1 (505 aa).

A compositionally biased stretch (basic and acidic residues) spans 1–10 (MIEPSMEREN). The segment at 1–32 (MIEPSMERENGALTAATTTTTAVTSPPPMASS) is disordered. The segment covering 14-24 (TAATTTTTAVT) has biased composition (low complexity). Residues 134–137 (LSGG) carry the Substrate binding motif. Substrate is bound at residue Asn253. Positions 335-336 (EY) match the Substrate binding motif. Lys432 contacts substrate.

The protein belongs to the UDPGP type 1 family. As to quaternary structure, monomer. The cofactor is Mg(2+). It depends on Mn(2+) as a cofactor. Expressed in root tips, stipules and mature pollen grains.

The catalysed reaction is N-acetyl-alpha-D-glucosamine 1-phosphate + UTP + H(+) = UDP-N-acetyl-alpha-D-glucosamine + diphosphate. It catalyses the reaction N-acetyl-alpha-D-galactosamine 1-phosphate + UTP + H(+) = UDP-N-acetyl-alpha-D-galactosamine + diphosphate. The protein operates within nucleotide-sugar biosynthesis; UDP-N-acetyl-alpha-D-glucosamine biosynthesis; UDP-N-acetyl-alpha-D-glucosamine from N-acetyl-alpha-D-glucosamine 1-phosphate: step 1/1. With respect to regulation, inhibited by hygromycin and streptomycin, but not by gentamycin or kanamycin. Its function is as follows. Uridylyltransferase involved in the biosynthesis of UDP-glucosamine, an essential precursor for glycoprotein and glycolipid synthesis. Can use both UDP-glucosamine and the 4-epimer UDP-galactosamine as substrates, but no other sugars or NTPs. Acts redundantly with GLCNAC1PUT2. Required for gametogenesis and embryo development. This chain is UDP-N-acetylglucosamine diphosphorylase 1 (GLCNAC1PUT1), found in Arabidopsis thaliana (Mouse-ear cress).